The following is a 180-amino-acid chain: ADP-ribosylation factor-like protein 1 (180 aa).

Residue Gly2 is the site of N-myristoyl glycine attachment. GTP contacts are provided by residues 23 to 30, 66 to 70, and 125 to 128; these read GLDGAGKT, DLGGQ, and NKQD.

This sequence belongs to the small GTPase superfamily. Arf family. In terms of tissue distribution, expressed in neuronal cells. Expression in hypodermal tissues is absent.

The protein resides in the golgi apparatus. It localises to the cytoplasm. It is found in the cytoplasmic granule. GTP-binding protein that may be involved in protein trafficking; may modulate vesicle budding and uncoating within the Golgi apparatus. Plays a role in male tail tip morphogenesis. In Caenorhabditis elegans, this protein is ADP-ribosylation factor-like protein 1.